Here is a 984-residue protein sequence, read N- to C-terminus: Translation initiation factor IF-2 (984 aa).

Disordered stretches follow at residues lysine 92 to arginine 267 and methionine 280 to valine 392. Over residues proline 104–proline 123 the composition is skewed to low complexity. A compositionally biased stretch (basic and acidic residues) spans arginine 124–glutamine 177. Residues aspartate 193–glutamine 235 show a composition bias toward low complexity. Basic and acidic residues-rich tracts occupy residues alanine 236–arginine 267 and lysine 291–alanine 302. A compositionally biased stretch (low complexity) spans proline 310–glycine 335. The segment covering proline 351–glycine 361 has biased composition (basic and acidic residues). Residues alanine 363–glycine 375 are compositionally biased toward gly residues. The segment covering glycine 381–valine 392 has biased composition (basic and acidic residues). Positions proline 484–lysine 653 constitute a tr-type G domain. Residues glycine 493 to threonine 500 are G1. GTP is bound at residue glycine 493 to threonine 500. The tract at residues glycine 518–histidine 522 is G2. Residues aspartate 539–glycine 542 form a G3 region. GTP is bound by residues aspartate 539 to histidine 543 and asparagine 593 to aspartate 596. Positions asparagine 593–aspartate 596 are G4. The tract at residues serine 629–lysine 631 is G5.

Belongs to the TRAFAC class translation factor GTPase superfamily. Classic translation factor GTPase family. IF-2 subfamily.

It is found in the cytoplasm. One of the essential components for the initiation of protein synthesis. Protects formylmethionyl-tRNA from spontaneous hydrolysis and promotes its binding to the 30S ribosomal subunits. Also involved in the hydrolysis of GTP during the formation of the 70S ribosomal complex. The protein is Translation initiation factor IF-2 of Variovorax paradoxus (strain S110).